Consider the following 298-residue polypeptide: Probable endonuclease 4 (298 aa).

9 residues coordinate Zn(2+): His-69, His-111, Glu-146, Asp-180, His-183, His-215, Asp-228, His-230, and Glu-260.

This sequence belongs to the AP endonuclease 2 family. Requires Zn(2+) as cofactor.

It carries out the reaction Endonucleolytic cleavage to 5'-phosphooligonucleotide end-products.. In terms of biological role, endonuclease IV plays a role in DNA repair. It cleaves phosphodiester bonds at apurinic or apyrimidinic (AP) sites, generating a 3'-hydroxyl group and a 5'-terminal sugar phosphate. The protein is Probable endonuclease 4 of Bacillus anthracis (strain A0248).